A 317-amino-acid chain; its full sequence is Putative methyltransferase YMR310C (317 aa).

Phosphoserine is present on serine 190.

It belongs to the class IV-like SAM-binding methyltransferase superfamily.

Its subcellular location is the nucleus. The protein is Putative methyltransferase YMR310C of Saccharomyces cerevisiae (strain ATCC 204508 / S288c) (Baker's yeast).